The primary structure comprises 222 residues: Kinetochore protein Spc25 (222 aa).

The stretch at 51-86 (RHQRKVGKLQKVLMERREELDKRVSFIEELDRELEA) forms a coiled coil.

Belongs to the SPC25 family. In terms of assembly, component of the Ndc80 complex, which is composed of Ndc80, Nuf2 and Spc25.

It localises to the nucleus. The protein localises to the chromosome. The protein resides in the centromere. Its subcellular location is the kinetochore. Functionally, acts as a component of the essential kinetochore-associated Ndc80 complex, which is required for chromosome segregation and spindle checkpoint activity during meiosis and mitosis. Required for kinetochore integrity and the organization of stable microtubule binding sites in the outer plate of the kinetochore. Participates in SAC signaling that responds specifically to disruptions in spindle microtubule dynamics. The NDC80 complex synergistically enhances the affinity of the SKA1 complex for microtubules and may allow the NDC80 complex to track depolymerizing microtubules. The polypeptide is Kinetochore protein Spc25 (Drosophila mauritiana (Fruit fly)).